Consider the following 967-residue polypeptide: Leucine--tRNA ligase (967 aa).

Residues 43 to 53 (PYLSGHLHVGH) carry the 'HIGH' region motif. The 'KMSKS' region signature appears at 650 to 654 (KMSKS). Lys-653 contacts ATP.

Belongs to the class-I aminoacyl-tRNA synthetase family.

It localises to the cytoplasm. The enzyme catalyses tRNA(Leu) + L-leucine + ATP = L-leucyl-tRNA(Leu) + AMP + diphosphate. This Pyrococcus furiosus (strain ATCC 43587 / DSM 3638 / JCM 8422 / Vc1) protein is Leucine--tRNA ligase.